The following is a 350-amino-acid chain: Protein RecA (350 aa).

ATP is bound at residue 66 to 73; sequence GPESSGKT.

This sequence belongs to the RecA family.

The protein localises to the cytoplasm. Can catalyze the hydrolysis of ATP in the presence of single-stranded DNA, the ATP-dependent uptake of single-stranded DNA by duplex DNA, and the ATP-dependent hybridization of homologous single-stranded DNAs. It interacts with LexA causing its activation and leading to its autocatalytic cleavage. The protein is Protein RecA of Nocardioides sp. (strain ATCC BAA-499 / JS614).